A 188-amino-acid polypeptide reads, in one-letter code: Peptidyl-tRNA hydrolase (188 aa).

F15 lines the tRNA pocket. H20 acts as the Proton acceptor in catalysis. TRNA contacts are provided by Y64, N66, and N112.

The protein belongs to the PTH family. Monomer.

It is found in the cytoplasm. It catalyses the reaction an N-acyl-L-alpha-aminoacyl-tRNA + H2O = an N-acyl-L-amino acid + a tRNA + H(+). Hydrolyzes ribosome-free peptidyl-tRNAs (with 1 or more amino acids incorporated), which drop off the ribosome during protein synthesis, or as a result of ribosome stalling. Functionally, catalyzes the release of premature peptidyl moieties from peptidyl-tRNA molecules trapped in stalled 50S ribosomal subunits, and thus maintains levels of free tRNAs and 50S ribosomes. The protein is Peptidyl-tRNA hydrolase of Borrelia duttonii (strain Ly).